Here is a 400-residue protein sequence, read N- to C-terminus: Large envelope protein (400 aa).

M1 carries the post-translational modification N-acetylmethionine. Disordered stretches follow at residues 1-24 and 89-116; these read MGGW…PLGF and PAMP…RDSH. The N-myristoyl glycine; by host moiety is linked to residue G2. Residues 2–119 are pre-S1; it reads GGWSSKPRKG…PPLRDSHPQA (118 aa). The tract at residues 2 to 174 is pre-S; the sequence is GGWSSKPRKG…SSRIGDPAPN (173 aa). The Virion surface; in external conformation portion of the chain corresponds to 2-181; that stretch reads GGWSSKPRKG…APNMENITSG (180 aa). The Intravirion; in internal conformation portion of the chain corresponds to 2–253; sequence GGWSSKPRKG…PGYRWMCLRR (252 aa). W4 carries an N-linked (GlcNAc...) asparagine glycan. Over residues 96 to 106 the composition is skewed to polar residues; the sequence is STNRQSGRQPT. Positions 120 to 174 are pre-S2; sequence MQWNSTAFHQALQDPRVRGLYFPAGGSSSGTLNPVPTIASHISSISSRIGDPAPN. The chain crosses the membrane as a helical span at residues 182-202; that stretch reads FLGPLLVLQAGFFLLTRILTI. Residues 203–253 lie on the Intravirion; in external conformation side of the membrane; the sequence is PQSLDSWWTSLNFLGGAPVCLGQNSQSPTSNHSPTSCPPICPGYRWMCLRR. A helical transmembrane segment spans residues 254 to 274; that stretch reads FIIFLFILLLCLIFLLVLLDY. Residues 275–348 lie on the Virion surface side of the membrane; sequence QGMLPVCPLI…WASVRFSWLS (74 aa). N320 carries an N-linked (GlcNAc...) asparagine; by host glycan. The helical transmembrane segment at 349–369 threads the bilayer; the sequence is LLVPFVQWFVGLSPTVWLSAI. The Intravirion portion of the chain corresponds to 370–375; the sequence is WMMWYW. The chain crosses the membrane as a helical span at residues 376-398; it reads GPSLYNILSPFIPLLPIFFCLWV. At 399–400 the chain is on the virion surface side; the sequence is YI.

It belongs to the orthohepadnavirus major surface antigen family. In its internal form (Li-HBsAg), interacts with the capsid protein and with the isoform S. Interacts with host chaperone CANX. In terms of assembly, associates with host chaperone CANX through its pre-S2 N glycan; this association may be essential for isoform M proper secretion. As to quaternary structure, interacts with isoform L. Interacts with the antigens of satellite virus HDV (HDVAgs); this interaction is required for encapsidation of HDV genomic RNA. Post-translationally, isoform M is N-terminally acetylated by host at a ratio of 90%, and N-glycosylated by host at the pre-S2 region. In terms of processing, myristoylated.

It localises to the virion membrane. Functionally, the large envelope protein exists in two topological conformations, one which is termed 'external' or Le-HBsAg and the other 'internal' or Li-HBsAg. In its external conformation the protein attaches the virus to cell receptors and thereby initiating infection. This interaction determines the species specificity and liver tropism. This attachment induces virion internalization predominantly through caveolin-mediated endocytosis. The large envelope protein also assures fusion between virion membrane and endosomal membrane. In its internal conformation the protein plays a role in virion morphogenesis and mediates the contact with the nucleocapsid like a matrix protein. In terms of biological role, the middle envelope protein plays an important role in the budding of the virion. It is involved in the induction of budding in a nucleocapsid independent way. In this process the majority of envelope proteins bud to form subviral lipoprotein particles of 22 nm of diameter that do not contain a nucleocapsid. This chain is Large envelope protein, found in Hepatitis B virus genotype A1 subtype adw (isolate Philippines/pFDW294/1988) (HBV-A).